Consider the following 348-residue polypeptide: Oxidase ucsJ (348 aa).

It belongs to the avfA family.

Its pathway is mycotoxin biosynthesis. Functionally, oxidase; part of the gene cluster that mediates the biosynthesis of UCS1025A, a member of the pyrrolizidinone family that acts as a strong telomerase inhibitor and displays potent antibacterial and antitumor properties. These compounds share a hemiaminal-containing pyrrolizidinone core fused with a gamma-lactone, giving a furopyrrolizidine that is connected to a decalin fragment. The polyketide synthase module (PKS) of the PKS-NRPS ucsA is responsible for the synthesis of the polyketide backbone via the condensation of an acetyl-CoA starter unit with 6 malonyl-CoA units. The downstream nonribosomal peptide synthetase (NRPS) module then amidates the carboxyl end of the polyketide with a 2S,3S-methylproline derived from L-isoleucine by the 2-oxoglutarate-dependent dioxygenase ucsF which converts L-isoleucine to (4S,5S)-4-methylpyrroline-5-carboxylate that is further converted to 2S,3S-methylproline by the pyrroline-5-carboxylate reductase ucsG. Reductive release of the completed aminoacyl polyketide from the assembly line can form the 3-pyrrolin-2-one structure via an intramolecular Knoevenagel reaction. Because ucsA lacks a designated enoylreductase (ER) domain, the required activity is provided the enoyl reductase ucsL. This keto acyclic precursor is the substrate of the Diels-Alderase ucsH, that catalyzes the Diels-Alder cycloaddition. Oxidation of the 3S-methyl group to a carboxylate by the cytochrome P450 monooxygenase ucsK allows an oxa-Michael cyclization that might involve the reductase/dehydrogenase ucsI and which furnishes the furopyrrolizidine. The oxidase ucsJ likely plays a critical role in stereoselective reduction of the C5-C6 double bond to afford the required R-configured carboxylate group. Further enolization and oxidation at C5 by an unidentified enzyme affords the last intermediate that can undergo oxa-Michael cyclization to yield UCS1025A. This chain is Oxidase ucsJ, found in Acremonium sp.